An 86-amino-acid polypeptide reads, in one-letter code: Alpha-mammal toxin Ts3 (86 aa).

The first 19 residues, 1 to 19 (MNYFILLVVVCLLTAGTEG), serve as a signal peptide directing secretion. In terms of domain architecture, LCN-type CS-alpha/beta spans 21–82 (KDGYPVEYDN…EPTKTNGKCK (62 aa)). Disulfide bonds link C31–C81, C35–C57, C43–C64, and C47–C66. A Serine amide modification is found at S83.

As to expression, expressed by the venom gland.

The protein resides in the secreted. Alpha toxins bind voltage-independently at site-3 of sodium channels (Nav) and inhibit the inactivation of the activated channels, thereby blocking neuronal transmission. This synthetic toxin inhibits inactivation of rat Nav1.4/SCN4A (when tested at 201 nM). In addition, it has been shown to cause a persistent sodium channel activation in nitrergic inhibitory fibers innervating the rabbit corpus cavernosum, resulting in NO release and cavernosal smooth muscle relaxation. This toxin is active against mammals. Its function is as follows. this synthetic peptide with a Ser at position 31 (C12S) acts as a bradykinin-potentiating peptide (BPP). Induces endothelium-dependent vasodilation that is reverted by NO synthase inhibitor, suggesting it activates molecular targets on vascular endothelium leading to NO production and vasodilation. It appears to induce vasodilation through muscarinic acetylcholine receptors (AChR) M2 (CHRM2) and M3 (CHRM3). Does not inhibit the angiotensin-converting enzyme (ACE). Does not act via bradykinin B2 receptor. The sequence is that of Alpha-mammal toxin Ts3 from Tityus serrulatus (Brazilian scorpion).